Consider the following 171-residue polypeptide: Superoxide dismutase [Cu-Zn] 2 (171 aa).

The first 20 residues, methionine 1–serine 20, serve as a signal peptide directing secretion. Cu cation is bound by residues histidine 67, histidine 69, and histidine 85. Cysteine 74 and cysteine 167 are disulfide-bonded. Residues histidine 85, histidine 93, histidine 102, and aspartate 105 each coordinate Zn(2+). Cu cation is bound at residue histidine 147.

The protein belongs to the Cu-Zn superoxide dismutase family. The cofactor is Cu cation. Requires Zn(2+) as cofactor.

The catalysed reaction is 2 superoxide + 2 H(+) = H2O2 + O2. In terms of biological role, destroys radicals which are normally produced within the cells and which are toxic to biological systems. The protein is Superoxide dismutase [Cu-Zn] 2 (sodC2) of Aquifex aeolicus (strain VF5).